Here is a 420-residue protein sequence, read N- to C-terminus: G2/mitotic-specific cyclin-A (420 aa).

The tract at residues 64–93 is disordered; sequence VQGSRIQPTRAAKEKLKPPQNISDSQLVND. The span at 83-93 shows a compositional bias: polar residues; sequence QNISDSQLVND.

It belongs to the cyclin family. Cyclin AB subfamily.

Functionally, essential for the control of the cell cycle at the G2/M (mitosis) transition. Interacts with the CDC2 and CDK2 protein kinases to form MPF. G2/M cyclins accumulate steadily during G2 and are abruptly destroyed at mitosis. The polypeptide is G2/mitotic-specific cyclin-A (Hydra viridissima (Green hydra)).